A 93-amino-acid chain; its full sequence is Co-chaperonin GroES (93 aa).

The protein belongs to the GroES chaperonin family. In terms of assembly, heptamer of 7 subunits arranged in a ring. Interacts with the chaperonin GroEL.

The protein resides in the cytoplasm. In terms of biological role, together with the chaperonin GroEL, plays an essential role in assisting protein folding. The GroEL-GroES system forms a nano-cage that allows encapsulation of the non-native substrate proteins and provides a physical environment optimized to promote and accelerate protein folding. GroES binds to the apical surface of the GroEL ring, thereby capping the opening of the GroEL channel. This Streptococcus constellatus protein is Co-chaperonin GroES.